The following is a 466-amino-acid chain: Soluble pyridine nucleotide transhydrogenase (466 aa).

FAD is bound at residue 36 to 45; that stretch reads ERYHNVGGGC.

It belongs to the class-I pyridine nucleotide-disulfide oxidoreductase family. It depends on FAD as a cofactor.

It is found in the cytoplasm. It carries out the reaction NAD(+) + NADPH = NADH + NADP(+). Conversion of NADPH, generated by peripheral catabolic pathways, to NADH, which can enter the respiratory chain for energy generation. This Klebsiella pneumoniae subsp. pneumoniae (strain ATCC 700721 / MGH 78578) protein is Soluble pyridine nucleotide transhydrogenase.